The sequence spans 186 residues: Elongation factor P (186 aa).

Belongs to the elongation factor P family.

The protein localises to the cytoplasm. Its pathway is protein biosynthesis; polypeptide chain elongation. In terms of biological role, involved in peptide bond synthesis. Stimulates efficient translation and peptide-bond synthesis on native or reconstituted 70S ribosomes in vitro. Probably functions indirectly by altering the affinity of the ribosome for aminoacyl-tRNA, thus increasing their reactivity as acceptors for peptidyl transferase. This Brucella abortus (strain S19) protein is Elongation factor P.